The sequence spans 273 residues: Probable ribosomal RNA small subunit methyltransferase A (273 aa).

S-adenosyl-L-methionine-binding residues include N26, L28, G53, E74, D98, and N113.

Belongs to the class I-like SAM-binding methyltransferase superfamily. rRNA adenine N(6)-methyltransferase family. RsmA subfamily.

It is found in the cytoplasm. In terms of biological role, specifically dimethylates two adjacent adenosines in the loop of a conserved hairpin near the 3'-end of 16S rRNA in the 30S particle. May play a critical role in biogenesis of 30S subunits. This Methanothermobacter thermautotrophicus (strain ATCC 29096 / DSM 1053 / JCM 10044 / NBRC 100330 / Delta H) (Methanobacterium thermoautotrophicum) protein is Probable ribosomal RNA small subunit methyltransferase A.